We begin with the raw amino-acid sequence, 142 residues long: Small heat shock protein IbpB (142 aa).

Positions 26 to 137 (AGEGQSFPPY…AAQRIAISER (112 aa)) constitute a sHSP domain.

Belongs to the small heat shock protein (HSP20) family. As to quaternary structure, homodimer. Forms homomultimers of about 100-150 subunits at optimal growth temperatures. Conformation changes to oligomers at high temperatures or high ionic concentrations. The decrease in size of the multimers is accompanied by an increase in chaperone activity.

It localises to the cytoplasm. Functionally, associates with aggregated proteins, together with IbpA, to stabilize and protect them from irreversible denaturation and extensive proteolysis during heat shock and oxidative stress. Aggregated proteins bound to the IbpAB complex are more efficiently refolded and reactivated by the ATP-dependent chaperone systems ClpB and DnaK/DnaJ/GrpE. Its activity is ATP-independent. This chain is Small heat shock protein IbpB, found in Shigella boydii serotype 18 (strain CDC 3083-94 / BS512).